Here is a 412-residue protein sequence, read N- to C-terminus: G-protein coupled receptor homolog UL33 (412 aa).

Residues 1–35 (MDTIIHNTTNRSTDTPHVNITCNITEPLSAIRTTE) are Virion surface-facing. N-linked (GlcNAc...) asparagine; by host glycans are attached at residues asparagine 7, asparagine 19, and asparagine 23. Residues 36–56 (AVINTFIIFVGGPLNAIVLIT) traverse the membrane as a helical segment. The Intravirion portion of the chain corresponds to 57–80 (QLLTNRVLGYSTPTIYMTNLYSTN). A helical transmembrane segment spans residues 81-101 (FLTLTVLPFIVLSNQWLLPAS). Residues 102 to 106 (VASCK) are Virion surface-facing. Cysteine 105 and cysteine 188 are oxidised to a cystine. Residues 107-127 (FLSVIYYSSCTVGFATVALIA) form a helical membrane-spanning segment. The Intravirion portion of the chain corresponds to 128–147 (ADRYRVLHKRTYARQSYRST). The chain crosses the membrane as a helical span at residues 148–168 (YIILLLTWFAGLIFSMPAAVY). Topologically, residues 169 to 206 (TTVVIHNGTNGQSSNGHATCVLYFIADEVYTVLLSWKV) are virion surface. The chain crosses the membrane as a helical span at residues 207–227 (LLTLVWGAAPVIMMTWFYAFF). At 228 to 244 (YSTVQRASQKQRSRTLT) the chain is on the intravirion side. The helical transmembrane segment at 245-265 (FVSVLLISFVALQTPYVSIMI) threads the bilayer. The Virion surface portion of the chain corresponds to 266–292 (FNSYATAAWPMDCEHLTLRRTIGTLSR). Residues 293 to 313 (LVPHLHCLINPILYALLGHDF) form a helical membrane-spanning segment. Over 314 to 412 (LQRMRQCFRG…SQSHHNLSGV (99 aa)) the chain is Intravirion. The segment at 377 to 412 (NFPSGTWKGGQKTASNDTSTKIPHRLSQSHHNLSGV) is disordered. Positions 388-397 (KTASNDTSTK) are enriched in polar residues.

This sequence belongs to the G-protein coupled receptor 1 family. As to quaternary structure, heterodimerizes with US28.

Its subcellular location is the virion. It is found in the host cell membrane. The protein localises to the host cytoplasm. Its function is as follows. G-protein-coupled receptor (vGPCR) that constitutively activates multiple oncogenic signaling pathways including STAT3, AP-1, phospholipase C, NF-kappa-B or cAMP-responsive element (CRE) pathways. Plays an important role in viral reactivation from latency through activation of host CREB1, facilitating its recruitment to the viral major immediate early (MIE) genes. In turn, expression of the MIE-driven genes such as UL123 are de-repressed. Also facilitates virus dissemination via the extracellular and cell-to-cell route. This Human cytomegalovirus (strain Merlin) (HHV-5) protein is G-protein coupled receptor homolog UL33 (UL33).